The sequence spans 96 residues: Transmembrane protein PMIS2 (96 aa).

2 consecutive transmembrane segments (helical) span residues 31 to 51 and 76 to 96; these read VMLA…AIYF and WFNM…VLVL.

The protein belongs to the CD225/Dispanin family. As to expression, specifically expressed in testis.

It localises to the membrane. Its function is as follows. May play a role in spermatozoa mobility. In Mus musculus (Mouse), this protein is Transmembrane protein PMIS2.